The sequence spans 176 residues: Inner membrane-spanning protein YciB (176 aa).

5 helical membrane-spanning segments follow: residues Thr24–His44, Pro49–His69, Trp76–Phe96, Tyr121–Phe141, and Phe149–Leu169.

The protein belongs to the YciB family.

The protein resides in the cell inner membrane. Its function is as follows. Plays a role in cell envelope biogenesis, maintenance of cell envelope integrity and membrane homeostasis. This Paraburkholderia phymatum (strain DSM 17167 / CIP 108236 / LMG 21445 / STM815) (Burkholderia phymatum) protein is Inner membrane-spanning protein YciB.